The primary structure comprises 65 residues: Small ribosomal subunit protein bS21 (65 aa).

The tract at residues 45-65 (GRLKRSRSRRRAQRANEERNS) is disordered. A compositionally biased stretch (basic residues) spans 48–57 (KRSRSRRRAQ).

The protein belongs to the bacterial ribosomal protein bS21 family.

This chain is Small ribosomal subunit protein bS21, found in Chlorobium phaeobacteroides (strain DSM 266 / SMG 266 / 2430).